A 940-amino-acid polypeptide reads, in one-letter code: MEEDVFPKAYDPKGLEDKLYAFWEDAGMFTAQSASNKPPYAIIMPPPNVTGILHMGHALVNTLQDVLIRYKRMSGFEVCWVPGTDHAGIATQTVVERHLYSSLGKRRIDFSREEFLEYVWEWKEKSEGIILSQLRQLGCSCDWSRLRFTMEPLASRAVKKAFKVLFDRGHIYRGYYLVNWDPVLQTALADDEVEYEEKDGWLYYIRYRVVDSSDEIIVATTRPETLLGDTAIAISPDDERYSHLLGAKVHLPFVDREIPIIGDMSVDPLFGTGAVKITPAHDRDDYRTGINHNLPLVNILTPTGKINENGGIFAGLSKEKARDDIITALDAMGLFVKKEPYTLRVGVSYRSGAVIEPYLSKQWFVSVDSFRDSLREFVASDSIKIFPPEFTRNYLSWVNNLRDWCISRQLWWGHRIPVWYHKSDEDRIICYDGEGLPEEVAQDPDSWDQDPDVLDTWFSSGLWPLTCLGWPDVEAKDLKKFYPTSVLITGHDILFFWVTRMVLLCSAMVGEKPFSDVFLHGLIFGKSYKRYNNLGEWTYISGEEKHAYDMGKPLPKDVTAKWEKLSKSKGNVIDPLEMIDKYGADAVRMALCSCANRGEQIDLDYRLFEEYKNFANKIWNGARFIFGHISNLTGKDLADGINQNLLGLEDYYILDGFNRLLKELESAYQSYAFDRVTTMAYEFFRNDFCSTYIEIIKPTLYGKQGNDEDRLTKQKLLAVLLVNILGVLHPIAPFVTETLFLKLKEAIGVIVDASSDEITAHALNMLRADSYVLAPYPQAMRITIPDNLHASFALAERLVYTIRNIRGEMQLDPRASLEAFVICPEGVSVDTYVPMMCALGGLSSVEHLTEEPKDRVYSLGVVEGIRLGVFVPIEQITKEKNRLEKEKIRLEKAIESVSRLLGSENFRAKANPDLVSAKEEALKNNRMELQSILDKLASFS.

Positions 47-57 (PNVTGILHMGH) match the 'HIGH' region motif. The 'KMSKS' region motif lies at 564–568 (KLSKS). Position 567 (Lys567) interacts with ATP. The stretch at 872-938 (PIEQITKEKN…LQSILDKLAS (67 aa)) forms a coiled coil.

Belongs to the class-I aminoacyl-tRNA synthetase family. ValS type 1 subfamily. In terms of assembly, monomer.

The protein localises to the cytoplasm. The enzyme catalyses tRNA(Val) + L-valine + ATP = L-valyl-tRNA(Val) + AMP + diphosphate. Its function is as follows. Catalyzes the attachment of valine to tRNA(Val). As ValRS can inadvertently accommodate and process structurally similar amino acids such as threonine, to avoid such errors, it has a 'posttransfer' editing activity that hydrolyzes mischarged Thr-tRNA(Val) in a tRNA-dependent manner. The chain is Valine--tRNA ligase from Chlamydia felis (strain Fe/C-56) (Chlamydophila felis).